The sequence spans 363 residues: MLGMEKYFINEDWSPLKVFINRPDGFRVIEEISYKPATEWKGSIQGKYAVYLLRKRGIDHFTVISEISKILHSKIHYIGIKDTNAITEQIVYTTNVKNIIEKYENDKFLLTFLGYSNSKFNHTGNIFEIEIETDDIKEFEKRVNKLRSIKYLPAYIGYQRFGTKRPITHIIGKMLVLREWQNAIDFLVGYPFESESELVKKARYAYMKGDLKEALELFPKRFRDERIAIKLLLRNENYFNILRNLQTPLIFYIEAYQSYLFNKYLSRIMDPTKIDENLVIKIPTSYDSCDSICREIFREEGLLNINFKIKELKLNVKDLVRKAYTLIRNLTIKDKKITFALDRGIYATIVIREIARTDPRLFT.

Asp-82 (nucleophile) is an active-site residue. In terms of domain architecture, TRUD spans Tyr-151–Thr-363.

It belongs to the pseudouridine synthase TruD family.

It carries out the reaction uridine(13) in tRNA = pseudouridine(13) in tRNA. Could be responsible for synthesis of pseudouridine from uracil-13 in transfer RNAs. In Sulfurisphaera tokodaii (strain DSM 16993 / JCM 10545 / NBRC 100140 / 7) (Sulfolobus tokodaii), this protein is Probable tRNA pseudouridine synthase D.